A 533-amino-acid chain; its full sequence is Retinoid isomerohydrolase (533 aa).

Position 2 is an N-acetylserine (serine 2). Residues threonine 101 and threonine 105 each carry the phosphothreonine modification. A lipid anchor (S-palmitoyl cysteine; in membrane form) is attached at cysteine 112. Lysine 113 carries the N6-acetyllysine modification. Position 117 is a phosphoserine (serine 117). Histidine 180 contributes to the Fe cation binding site. Cysteine 231 carries the S-palmitoyl cysteine; in membrane form lipid modification. Histidine 241 and histidine 313 together coordinate Fe cation. S-palmitoyl cysteine; in membrane form attachment occurs at residues cysteine 329 and cysteine 330. Position 527 (histidine 527) interacts with Fe cation.

This sequence belongs to the carotenoid oxygenase family. As to quaternary structure, interacts with MYO7A; this mediates light-dependent intracellular transport of RPE65. Requires Fe(2+) as cofactor. Post-translationally, palmitoylation by LRAT regulates ligand binding specificity; the palmitoylated form (membrane form) specifically binds all-trans-retinyl-palmitate, while the soluble unpalmitoylated form binds all-trans-retinol (vitamin A). Retinal pigment epithelium specific.

It is found in the cytoplasm. The protein localises to the cell membrane. Its subcellular location is the microsome membrane. It carries out the reaction an all-trans-retinyl ester + H2O = 11-cis-retinol + a fatty acid + H(+). It catalyses the reaction lutein = (3R,3'S)-zeaxanthin. The enzyme catalyses all-trans-retinyl hexadecanoate + H2O = 11-cis-retinol + hexadecanoate + H(+). In terms of biological role, critical isomerohydrolase in the retinoid cycle involved in regeneration of 11-cis-retinal, the chromophore of rod and cone opsins. Catalyzes the cleavage and isomerization of all-trans-retinyl fatty acid esters to 11-cis-retinol which is further oxidized by 11-cis retinol dehydrogenase to 11-cis-retinal for use as visual chromophore. Essential for the production of 11-cis retinal for both rod and cone photoreceptors. Also capable of catalyzing the isomerization of lutein to meso-zeaxanthin an eye-specific carotenoid. The soluble form binds vitamin A (all-trans-retinol), making it available for LRAT processing to all-trans-retinyl ester. The membrane form, palmitoylated by LRAT, binds all-trans-retinyl esters, making them available for IMH (isomerohydrolase) processing to all-cis-retinol. The soluble form is regenerated by transferring its palmitoyl groups onto 11-cis-retinol, a reaction catalyzed by LRAT. In Chlorocebus aethiops (Green monkey), this protein is Retinoid isomerohydrolase (RPE65).